Reading from the N-terminus, the 156-residue chain is Transcriptional repressor NrdR (156 aa).

Residues 3–34 fold into a zinc finger; it reads CPFCGSMDTRVLDSRPTLDGAAIRRRRECISC. Residues 49-139 form the ATP-cone domain; that stretch reads VLVIKKDGRR…VYRDFREVDQ (91 aa).

This sequence belongs to the NrdR family. It depends on Zn(2+) as a cofactor.

Negatively regulates transcription of bacterial ribonucleotide reductase nrd genes and operons by binding to NrdR-boxes. In Thermotoga neapolitana (strain ATCC 49049 / DSM 4359 / NBRC 107923 / NS-E), this protein is Transcriptional repressor NrdR.